The following is a 328-amino-acid chain: ATP-dependent 6-phosphofructokinase (328 aa).

Gly-11 serves as a coordination point for ATP. An ADP-binding site is contributed by 21 to 25 (RAAVR). Residues 72–73 (RS) and 102–105 (GNGT) each bind ATP. Asn-103 contributes to the Mg(2+) binding site. 126–128 (TID) provides a ligand contact to substrate. Asp-128 functions as the Proton acceptor in the catalytic mechanism. Residue Arg-155 participates in ADP binding. Substrate contacts are provided by residues Arg-163 and 170–172 (MGR). ADP is bound by residues 186 to 188 (GAE) and 214 to 216 (KAS). Residues Glu-223, Arg-247, and 253–256 (HVQR) contribute to the substrate site.

Belongs to the phosphofructokinase type A (PFKA) family. ATP-dependent PFK group I subfamily. Prokaryotic clade 'B1' sub-subfamily. As to quaternary structure, homotetramer. Mg(2+) serves as cofactor.

Its subcellular location is the cytoplasm. The catalysed reaction is beta-D-fructose 6-phosphate + ATP = beta-D-fructose 1,6-bisphosphate + ADP + H(+). It functions in the pathway carbohydrate degradation; glycolysis; D-glyceraldehyde 3-phosphate and glycerone phosphate from D-glucose: step 3/4. With respect to regulation, allosterically activated by ADP and other diphosphonucleosides, and allosterically inhibited by phosphoenolpyruvate. Catalyzes the phosphorylation of D-fructose 6-phosphate to fructose 1,6-bisphosphate by ATP, the first committing step of glycolysis. The chain is ATP-dependent 6-phosphofructokinase from Cytophaga hutchinsonii (strain ATCC 33406 / DSM 1761 / CIP 103989 / NBRC 15051 / NCIMB 9469 / D465).